Reading from the N-terminus, the 421-residue chain is Core-capsid bridging protein (421 aa).

The protein belongs to the adenoviridae core-capsid bridging protein family. As to quaternary structure, monomer. Homodimer. Exists in equilibrium between monomers and dimers in solution. Interacts with the histone-like nucleoprotein; this interactions bridge the virus core to the capsid. Interacts with core protein X; this interactions bridge the virus core to the capsid. Interacts with the endosome lysis protein VI; this interactions bridge the virus core to the capsid. Interacts with the peripentonal hexons. Interacts with host NPM1; this interaction might play a role in virus assembly.

It localises to the virion. The protein resides in the host nucleus. Its subcellular location is the host nucleolus. Functionally, associates loosely with the viral DNA to form an outer shell around the nucleoprotein-DNA complex and links it with the capsid by binding the endosome lysis protein. Dissociates from the viral genome during entry. Might be involved in nuclear capsid assembly of the viral particles through its association with NPM1/nucleophosmin. In Canine adenovirus serotype 1 (strain RI261) (CAdV-1), this protein is Core-capsid bridging protein.